A 219-amino-acid chain; its full sequence is Ribose-5-phosphate isomerase A (219 aa).

Substrate is bound by residues 28 to 31 (SGST), 81 to 84 (DGAD), and 94 to 97 (KGGG). Catalysis depends on Glu-103, which acts as the Proton acceptor. Lys-121 is a binding site for substrate.

It belongs to the ribose 5-phosphate isomerase family. In terms of assembly, homodimer.

It catalyses the reaction aldehydo-D-ribose 5-phosphate = D-ribulose 5-phosphate. It functions in the pathway carbohydrate degradation; pentose phosphate pathway; D-ribose 5-phosphate from D-ribulose 5-phosphate (non-oxidative stage): step 1/1. Catalyzes the reversible conversion of ribose-5-phosphate to ribulose 5-phosphate. The polypeptide is Ribose-5-phosphate isomerase A (Haemophilus ducreyi (strain 35000HP / ATCC 700724)).